Here is a 129-residue protein sequence, read N- to C-terminus: Protein BEX2 (129 aa).

Positions 1–38 (MESKVEQGVKNLNMENDHQEKEEKEEKPQDANKREPVV) are disordered. The span at 15-36 (ENDHQEKEEKEEKPQDANKREP) shows a compositional bias: basic and acidic residues. At Arg51 the chain carries Omega-N-methylarginine. The tract at residues 108–129 (SLRAVSTDPPHHDHHDEFCLMP) is disordered. Positions 116-129 (PPHHDHHDEFCLMP) are enriched in basic and acidic residues. The tract at residues 118–122 (HHDHH) is his cluster. Residue Cys126 participates in Zn(2+) binding.

It belongs to the BEX family. Interacts with LMO2, possibly leading to regulate the transcriptional activity of a DNA-binding complex containing LMO2. Interacts with OMP.

It is found in the nucleus. Its subcellular location is the cytoplasm. Its function is as follows. Regulator of mitochondrial apoptosis and G1 cell cycle. Regulates the level of PP2A regulatory subunit B and PP2A phosphatase activity. In absence of reductive stress, acts as a pseudosubstrate for the CRL2(FEM1B) complex: associates with FEM1B via zinc, thereby preventing association between FEM1B and its substrates. The chain is Protein BEX2 (Bex2) from Rattus norvegicus (Rat).